The sequence spans 244 residues: MASTDDNKPPTASDFAKDAEPQFDPTARTRNWFSILLGTMPPSHQILYREDQYARHEKRDCDKCEEWRDYNLKYSPIVIFMQKNIRDLNGKLDADNIRCRRCPTRITEDGKMVRQGGGFSPEHGIQLCANEMRDSKHVEDTLAHEMVHAWDHLRWKVDWGDLRHAACSEIRAASLSGECRWTREFWTRNNYRVTQQHQECVRRRAVKSVLARPWCKDDVQAVKVVNEVWDSCYSDTRPFDEIYK.

Residues 1–22 are disordered; sequence MASTDDNKPPTASDFAKDAEPQ. His144 serves as a coordination point for a divalent metal cation. The active site involves Glu145. Residue His148 coordinates a divalent metal cation.

Belongs to the peptidase M76 family.

Its subcellular location is the mitochondrion inner membrane. In terms of biological role, has a dual role in the assembly of mitochondrial ATPase. Acts as a protease that removes N-terminal residues of mitochondrial ATPase CF(0) subunit 6 at the intermembrane space side. Also involved in the correct assembly of the membrane-embedded ATPase CF(0) particle, probably mediating association of subunit 6 with the subunit 9 ring. This Sclerotinia sclerotiorum (strain ATCC 18683 / 1980 / Ss-1) (White mold) protein is Mitochondrial inner membrane protease atp23 (atp23).